The sequence spans 203 residues: ATP-dependent Clp protease proteolytic subunit (203 aa).

Ser-107 acts as the Nucleophile in catalysis. His-132 is a catalytic residue.

This sequence belongs to the peptidase S14 family. As to quaternary structure, fourteen ClpP subunits assemble into 2 heptameric rings which stack back to back to give a disk-like structure with a central cavity, resembling the structure of eukaryotic proteasomes.

It localises to the cytoplasm. It carries out the reaction Hydrolysis of proteins to small peptides in the presence of ATP and magnesium. alpha-casein is the usual test substrate. In the absence of ATP, only oligopeptides shorter than five residues are hydrolyzed (such as succinyl-Leu-Tyr-|-NHMec, and Leu-Tyr-Leu-|-Tyr-Trp, in which cleavage of the -Tyr-|-Leu- and -Tyr-|-Trp bonds also occurs).. Functionally, cleaves peptides in various proteins in a process that requires ATP hydrolysis. Has a chymotrypsin-like activity. Plays a major role in the degradation of misfolded proteins. This is ATP-dependent Clp protease proteolytic subunit from Shewanella piezotolerans (strain WP3 / JCM 13877).